The sequence spans 168 residues: MAQLLTPLESILAIIPALAANGAPVLLKYHGTPIDGGKRFLDGRPVLGPGKTWEGLATGILYGSVIALLAASATCNPKLYAAGVFASIGAMLGDMLGAFIKRRLGLERGAPAPLLDQLDFYSGALLALYAAGYVVHPAVALTFTPIVIALHRLTNMAANRLRLKPVPW.

The next 5 helical transmembrane spans lie at proline 7–leucine 27, glycine 55–cysteine 75, tyrosine 80–isoleucine 100, glycine 109–tyrosine 129, and alanine 130–leucine 150.

This sequence belongs to the CDP-archaeol synthase family. Requires Mg(2+) as cofactor.

The protein resides in the cell membrane. It carries out the reaction 2,3-bis-O-(geranylgeranyl)-sn-glycerol 1-phosphate + CTP + H(+) = CDP-2,3-bis-O-(geranylgeranyl)-sn-glycerol + diphosphate. It participates in membrane lipid metabolism; glycerophospholipid metabolism. Functionally, catalyzes the formation of CDP-2,3-bis-(O-geranylgeranyl)-sn-glycerol (CDP-archaeol) from 2,3-bis-(O-geranylgeranyl)-sn-glycerol 1-phosphate (DGGGP) and CTP. This reaction is the third ether-bond-formation step in the biosynthesis of archaeal membrane lipids. This is CDP-archaeol synthase from Hyperthermus butylicus (strain DSM 5456 / JCM 9403 / PLM1-5).